The sequence spans 427 residues: MLDLKLLQNNPEVVAEALAKRNSGIDITLFTALDQRRRELLLEVEALKSERNKASGDVARMKRAGENADALIEKLGALSDRIKTLDAETETVKAEVHQWLISLPNIPHESVPAGADENDNVFLHAWGEKPSFDFTPKEHWEIGPALGLDFERGSRLTGSRFTVLWHWAAKLERALTAFFLDVHTREHGYMEVYPPAMVNAQTMTGTGQLPKFEEDLFKLRDSEYYLIPTAEVPLTNLHSGEVVPEEKLPIAYTAQTQCFRSEAGSYGKDTKGFIRQHQFTKVEMVRFAHPEKSFEELEKLRSHAEVLLQKLGLHYRVVTLCSGDMGFSAAKTYDLEVWLPGQDKYREISSCSNCTDFQARRANIRTRLADAKKPVFLHTLNGSGLAVGRTLVAILENYQQADGSVVVPEVLRPYMGGVALLTPDGPF.

229 to 231 (TAE) serves as a coordination point for L-serine. Residue 260-262 (RSE) participates in ATP binding. Residue Glu-283 participates in L-serine binding. 347-350 (EISS) provides a ligand contact to ATP. Ser-383 is a binding site for L-serine.

This sequence belongs to the class-II aminoacyl-tRNA synthetase family. Type-1 seryl-tRNA synthetase subfamily. In terms of assembly, homodimer. The tRNA molecule binds across the dimer.

The protein localises to the cytoplasm. The catalysed reaction is tRNA(Ser) + L-serine + ATP = L-seryl-tRNA(Ser) + AMP + diphosphate + H(+). The enzyme catalyses tRNA(Sec) + L-serine + ATP = L-seryl-tRNA(Sec) + AMP + diphosphate + H(+). Its pathway is aminoacyl-tRNA biosynthesis; selenocysteinyl-tRNA(Sec) biosynthesis; L-seryl-tRNA(Sec) from L-serine and tRNA(Sec): step 1/1. In terms of biological role, catalyzes the attachment of serine to tRNA(Ser). Is also able to aminoacylate tRNA(Sec) with serine, to form the misacylated tRNA L-seryl-tRNA(Sec), which will be further converted into selenocysteinyl-tRNA(Sec). The chain is Serine--tRNA ligase from Oleidesulfovibrio alaskensis (strain ATCC BAA-1058 / DSM 17464 / G20) (Desulfovibrio alaskensis).